A 703-amino-acid chain; its full sequence is Zinc finger protein 750 (703 aa).

The CCHC-type zinc finger occupies 25 to 51 (YKCFQCPFTCNEKSHLFNHMKYGLCKN). Residues C27, C30, H43, and C49 each contribute to the Zn(2+) site. 4 disordered regions span residues 60–96 (DRVPKCSKPNSSDPKQTNQPDPVVKPTSSKPVPSGLS), 121–147 (GPHRCLGQKPTPHKEAAPPSPAPEAAV), 362–617 (PSKL…EQKQ), and 633–703 (NVEP…TRVS). The segment covering 67–78 (KPNSSDPKQTNQ) has biased composition (polar residues). Positions 79–93 (PDPVVKPTSSKPVPS) are enriched in low complexity. Residues 375–399 (TELEKQSPTPEAKEPSKDGQRDTEG) show a composition bias toward basic and acidic residues. Residues 418 to 428 (SPTNFTQTSQP) are compositionally biased toward polar residues. Low complexity predominate over residues 583 to 592 (SSGDGPDPSS). The segment covering 605–616 (QDIRAADSDEQK) has biased composition (basic and acidic residues).

It is found in the nucleus. Transcription factor involved in epidermis differentiation. Required for terminal epidermal differentiation: acts downstream of p63/TP63 and activates expression of late epidermal differentiation genes. Specifically binds to the promoter of KLF4 and promotes its expression. The polypeptide is Zinc finger protein 750 (ZNF750) (Bos taurus (Bovine)).